We begin with the raw amino-acid sequence, 330 residues long: D-cysteine desulfhydrase (330 aa).

K52 carries the N6-(pyridoxal phosphate)lysine modification.

It belongs to the ACC deaminase/D-cysteine desulfhydrase family. Homodimer. The cofactor is pyridoxal 5'-phosphate.

It carries out the reaction D-cysteine + H2O = hydrogen sulfide + pyruvate + NH4(+) + H(+). Functionally, catalyzes the alpha,beta-elimination reaction of D-cysteine and of several D-cysteine derivatives. It could be a defense mechanism against D-cysteine. The chain is D-cysteine desulfhydrase from Yersinia pseudotuberculosis serotype O:1b (strain IP 31758).